We begin with the raw amino-acid sequence, 490 residues long: MEESLWVVTATVVVVFAIAKLLKKSSSISTMEWPKGPKKLPIIGNLHQLGGEAFHVVLANLAKIHGTVMTIWVGAWRPMIVISDIDKAWEVLVNKSSDYAGRDFPEITKIISANWKNISCSDSGPFWQNLRKGLQGGALAPLNVISQYQLQERDMKNLITSMQEKASKNNGILKPLDYLKEETIRLLSRLIFGQSFNDENFVKGVHLALDDLVRISGYASLADAFKFCENLPSHKKSIREVHEVNERVVNLVKPYLVKNPPTNTYLYFLNSQKFSDEVIISAVLEVYDLGVDSTASTAVWALTFLVREPRVQEKLYKEIIDLTGGERSVKVEDVSKLPYLQAVMKETMRMKPIAPMAIPHKTSRDTSLMGKKVNKGTSIMVNLYAIHHNPKVFPEPYKFIPERFLQGQESKYGDIKEMEQSLLPFSAGMRICAGMELGKLQYGFSLASLVEAFKWTCAVDGKLPDLSEDHCFILLMKNPLEARITPRTQL.

The helical transmembrane segment at 2–22 threads the bilayer; the sequence is EESLWVVTATVVVVFAIAKLL. Heme is bound at residue Cys432.

The protein belongs to the cytochrome P450 family. The cofactor is heme. In terms of tissue distribution, expressed in roots. Detected in leaves and stems.

The protein resides in the endoplasmic reticulum membrane. The enzyme catalyses (S)-scoulerine + reduced [NADPH--hemoprotein reductase] + O2 = (S)-cheilanthifoline + oxidized [NADPH--hemoprotein reductase] + 2 H2O + H(+). It participates in alkaloid biosynthesis. Its function is as follows. Methylenedioxy bridge-forming cytochrome P450 involved in the biosynthesis of isoquinoline alkaloids. Converts (S)-scoulerine into (R,S)-cheilanthifoline. Catalyzes an oxidative reaction that does not incorporate oxygen into the product. This chain is Cheilanthifoline synthase (CYP719A5), found in Eschscholzia californica (California poppy).